Consider the following 158-residue polypeptide: MPYDAEILVVGCGNILFKDDGFGPEVIKALEEYFKDREKPDNVMFIDAGTGGPHFVFSLPHEEWKKMIVVDVVEFNAEPGTLRKFDVTEIPKGSYENMHTWPVSQPLHELSEKIDVVVIGCKPKEISAPNVEMGLTPPVKKAIPRAIQMILDEIGVSK.

It belongs to the peptidase A31 family.

The polypeptide is Coenzyme F420 hydrogenase subunit delta (frhD) (Methanothermobacter thermautotrophicus (strain ATCC 29096 / DSM 1053 / JCM 10044 / NBRC 100330 / Delta H) (Methanobacterium thermoautotrophicum)).